A 444-amino-acid polypeptide reads, in one-letter code: MSHSPARQHLVESSRMDVVDSLLMNGSNITPPCELGLENETLFCLDQPQPSKEWQSALQILLYSIIFLLSVLGNTLVITVLIRNKRMRTVTNIFLLSLAVSDLMLCLFCMPFNLIPNLLKDFIFGSAVCKTTTYFMGTSVSVSTFNLVAISLERYGAICRPLQSRVWQTKSHALKVIAATWCLSFTIMTPYPIYSNLVPFTKNNNQTANMCRFLLPSDAMQQSWQTFLLLILFLLPGIVMVVAYGLISLELYQGIKFDASQKKSAKEKKPSTGSSTRYEDSDGCYLQKSRPPRKLELQQLSSGSGGSRLNRIRSSSSAANLIAKKRVIRMLIVIVVLFFLCWMPIFSANAWRAYDTVSAEKHLSGTPISFILLLSYTSSCVNPIIYCFMNKRFRLGFMATFPCCPNPGPPGVRGEVGEEEDGRTIRALLSRYSYSHMSTSAPPP.

Residues 1 to 56 are Extracellular-facing; it reads MSHSPARQHLVESSRMDVVDSLLMNGSNITPPCELGLENETLFCLDQPQPSKEWQS. N-linked (GlcNAc...) asparagine glycans are attached at residues Asn25 and Asn39. Residues Cys33 and Cys44 are joined by a disulfide bond. A helical membrane pass occupies residues 57 to 82; sequence ALQILLYSIIFLLSVLGNTLVITVLI. Residues 83 to 92 lie on the Cytoplasmic side of the membrane; that stretch reads RNKRMRTVTN. A helical transmembrane segment spans residues 93–119; that stretch reads IFLLSLAVSDLMLCLFCMPFNLIPNLL. The Extracellular segment spans residues 120-130; sequence KDFIFGSAVCK. Residues Cys129 and Cys211 are joined by a disulfide bond. The helical transmembrane segment at 131 to 152 threads the bilayer; the sequence is TTTYFMGTSVSVSTFNLVAISL. Residues 153–172 are Cytoplasmic-facing; it reads ERYGAICRPLQSRVWQTKSH. A helical membrane pass occupies residues 173 to 193; it reads ALKVIAATWCLSFTIMTPYPI. Over 194–225 the chain is Extracellular; the sequence is YSNLVPFTKNNNQTANMCRFLLPSDAMQQSWQ. Asn205 carries N-linked (GlcNAc...) asparagine glycosylation. Residues 226–249 traverse the membrane as a helical segment; that stretch reads TFLLLILFLLPGIVMVVAYGLISL. Topologically, residues 250-329 are cytoplasmic; that stretch reads ELYQGIKFDA…NLIAKKRVIR (80 aa). The interval 263 to 288 is disordered; that stretch reads KSAKEKKPSTGSSTRYEDSDGCYLQK. The helical transmembrane segment at 330 to 350 threads the bilayer; the sequence is MLIVIVVLFFLCWMPIFSANA. At 351 to 365 the chain is on the extracellular side; that stretch reads WRAYDTVSAEKHLSG. Residues 366–389 traverse the membrane as a helical segment; the sequence is TPISFILLLSYTSSCVNPIIYCFM. The Cytoplasmic segment spans residues 390–444; it reads NKRFRLGFMATFPCCPNPGPPGVRGEVGEEEDGRTIRALLSRYSYSHMSTSAPPP. The S-palmitoyl cysteine moiety is linked to residue Cys403.

It belongs to the G-protein coupled receptor 1 family. As to expression, pancreas and brain. Also expressed in the gastrointestinal system and vagus nerve.

The protein resides in the cell membrane. In terms of biological role, receptor for cholecystokinin. Mediates pancreatic growth and enzyme secretion, smooth muscle contraction of the gall bladder and stomach. Has a 1000-fold higher affinity for CCK rather than for gastrin. It modulates feeding and dopamine-induced behavior in the central and peripheral nervous system. This receptor mediates its action by association with G proteins that activate a phosphatidylinositol-calcium second messenger system. The sequence is that of Cholecystokinin receptor type A (Cckar) from Rattus norvegicus (Rat).